Consider the following 353-residue polypeptide: 3-isopropylmalate dehydrogenase (353 aa).

Substrate-binding residues include arginine 97, arginine 107, arginine 135, and aspartate 219. Positions 219, 243, and 247 each coordinate Mg(2+).

It belongs to the isocitrate and isopropylmalate dehydrogenases family. LeuB type 1 subfamily. Homodimer. Requires Mg(2+) as cofactor. The cofactor is Mn(2+).

The protein localises to the cytoplasm. It carries out the reaction (2R,3S)-3-isopropylmalate + NAD(+) = 4-methyl-2-oxopentanoate + CO2 + NADH. It functions in the pathway amino-acid biosynthesis; L-leucine biosynthesis; L-leucine from 3-methyl-2-oxobutanoate: step 3/4. Its function is as follows. Catalyzes the oxidation of 3-carboxy-2-hydroxy-4-methylpentanoate (3-isopropylmalate) to 3-carboxy-4-methyl-2-oxopentanoate. The product decarboxylates to 4-methyl-2 oxopentanoate. This chain is 3-isopropylmalate dehydrogenase, found in Bacteroides fragilis (strain ATCC 25285 / DSM 2151 / CCUG 4856 / JCM 11019 / LMG 10263 / NCTC 9343 / Onslow / VPI 2553 / EN-2).